Consider the following 555-residue polypeptide: CTP synthase (555 aa).

Positions Met-1 to Leu-267 are amidoligase domain. Ser-13 serves as a coordination point for CTP. Position 13 (Ser-13) interacts with UTP. ATP is bound by residues Ser-14–Ile-19 and Asp-71. Mg(2+) is bound by residues Asp-71 and Glu-141. Residues Asp-148 to Glu-150, Lys-188 to Gln-193, and Lys-224 contribute to the CTP site. UTP contacts are provided by residues Lys-188–Gln-193 and Lys-224. One can recognise a Glutamine amidotransferase type-1 domain in the interval Lys-292 to Arg-534. L-glutamine is bound at residue Gly-354. The Nucleophile; for glutamine hydrolysis role is filled by Cys-381. L-glutamine contacts are provided by residues Leu-382–Gln-385, Glu-405, and Arg-462. Residues His-507 and Glu-509 contribute to the active site. Positions Leu-532 to Pro-555 are disordered. A compositionally biased stretch (polar residues) spans Leu-540–Pro-555.

Belongs to the CTP synthase family. As to quaternary structure, homotetramer.

It carries out the reaction UTP + L-glutamine + ATP + H2O = CTP + L-glutamate + ADP + phosphate + 2 H(+). It catalyses the reaction L-glutamine + H2O = L-glutamate + NH4(+). The catalysed reaction is UTP + NH4(+) + ATP = CTP + ADP + phosphate + 2 H(+). Its pathway is pyrimidine metabolism; CTP biosynthesis via de novo pathway; CTP from UDP: step 2/2. With respect to regulation, allosterically activated by GTP, when glutamine is the substrate; GTP has no effect on the reaction when ammonia is the substrate. The allosteric effector GTP functions by stabilizing the protein conformation that binds the tetrahedral intermediate(s) formed during glutamine hydrolysis. Inhibited by the product CTP, via allosteric rather than competitive inhibition. In terms of biological role, catalyzes the ATP-dependent amination of UTP to CTP with either L-glutamine or ammonia as the source of nitrogen. Regulates intracellular CTP levels through interactions with the four ribonucleotide triphosphates. The protein is CTP synthase of Prochlorococcus marinus (strain MIT 9211).